Here is a 235-residue protein sequence, read N- to C-terminus: Large ribosomal subunit protein bL25 (235 aa).

A disordered region spans residues 201–235 (PVAEAKGKGKAAKPAATAKPAAAAAKPAAKPKAKK). The segment covering 212-228 (AKPAATAKPAAAAAKPA) has biased composition (low complexity).

Belongs to the bacterial ribosomal protein bL25 family. CTC subfamily. Part of the 50S ribosomal subunit; part of the 5S rRNA/L5/L18/L25 subcomplex. Contacts the 5S rRNA. Binds to the 5S rRNA independently of L5 and L18.

In terms of biological role, this is one of the proteins that binds to the 5S RNA in the ribosome where it forms part of the central protuberance. The chain is Large ribosomal subunit protein bL25 from Verminephrobacter eiseniae (strain EF01-2).